A 93-amino-acid chain; its full sequence is Acylphosphatase (93 aa).

The region spanning 5-93 (AKQIVVRGRV…PNFRGFQVTG (89 aa)) is the Acylphosphatase-like domain. Residues Arg-20 and Asn-38 contribute to the active site.

Belongs to the acylphosphatase family.

It catalyses the reaction an acyl phosphate + H2O = a carboxylate + phosphate + H(+). This Lacticaseibacillus paracasei (strain ATCC 334 / BCRC 17002 / CCUG 31169 / CIP 107868 / KCTC 3260 / NRRL B-441) (Lactobacillus paracasei) protein is Acylphosphatase (acyP).